The sequence spans 177 residues: ATP synthase subunit b (177 aa).

The helical transmembrane segment at Leu-19–Ile-39 threads the bilayer.

The protein belongs to the ATPase B chain family. In terms of assembly, F-type ATPases have 2 components, F(1) - the catalytic core - and F(0) - the membrane proton channel. F(1) has five subunits: alpha(3), beta(3), gamma(1), delta(1), epsilon(1). F(0) has three main subunits: a(1), b(2) and c(10-14). The alpha and beta chains form an alternating ring which encloses part of the gamma chain. F(1) is attached to F(0) by a central stalk formed by the gamma and epsilon chains, while a peripheral stalk is formed by the delta and b chains.

Its subcellular location is the cell membrane. In terms of biological role, f(1)F(0) ATP synthase produces ATP from ADP in the presence of a proton or sodium gradient. F-type ATPases consist of two structural domains, F(1) containing the extramembraneous catalytic core and F(0) containing the membrane proton channel, linked together by a central stalk and a peripheral stalk. During catalysis, ATP synthesis in the catalytic domain of F(1) is coupled via a rotary mechanism of the central stalk subunits to proton translocation. Its function is as follows. Component of the F(0) channel, it forms part of the peripheral stalk, linking F(1) to F(0). The polypeptide is ATP synthase subunit b (Mesoplasma florum (strain ATCC 33453 / NBRC 100688 / NCTC 11704 / L1) (Acholeplasma florum)).